The following is a 154-amino-acid chain: Myoglobin (154 aa).

One can recognise a Globin domain in the interval glycine 2–lysine 148. Serine 4 carries the phosphoserine modification. Histidine 65 is a binding site for nitrite. Histidine 65 is a binding site for O2. Threonine 68 carries the post-translational modification Phosphothreonine. Heme b is bound at residue histidine 94.

As to quaternary structure, monomeric.

Its subcellular location is the cytoplasm. The protein resides in the sarcoplasm. The enzyme catalyses Fe(III)-heme b-[protein] + nitric oxide + H2O = Fe(II)-heme b-[protein] + nitrite + 2 H(+). The catalysed reaction is H2O2 + AH2 = A + 2 H2O. Functionally, monomeric heme protein which primary function is to store oxygen and facilitate its diffusion within muscle tissues. Reversibly binds oxygen through a pentacoordinated heme iron and enables its timely and efficient release as needed during periods of heightened demand. Depending on the oxidative conditions of tissues and cells, and in addition to its ability to bind oxygen, it also has a nitrite reductase activity whereby it regulates the production of bioactive nitric oxide. Under stress conditions, like hypoxia and anoxia, it also protects cells against reactive oxygen species thanks to its pseudoperoxidase activity. The chain is Myoglobin from Bubalus bubalis (Domestic water buffalo).